A 117-amino-acid polypeptide reads, in one-letter code: Large ribosomal subunit protein bL20 (117 aa).

This sequence belongs to the bacterial ribosomal protein bL20 family.

Its function is as follows. Binds directly to 23S ribosomal RNA and is necessary for the in vitro assembly process of the 50S ribosomal subunit. It is not involved in the protein synthesizing functions of that subunit. This is Large ribosomal subunit protein bL20 from Actinobacillus succinogenes (strain ATCC 55618 / DSM 22257 / CCUG 43843 / 130Z).